A 382-amino-acid polypeptide reads, in one-letter code: Na(+)/H(+) antiporter NhaA (382 aa).

The next 11 membrane-spanning stretches (helical) occupy residues 14 to 34, 47 to 67, 87 to 107, 117 to 137, 146 to 166, 171 to 191, 205 to 225, 247 to 267, 271 to 291, 321 to 341, and 353 to 373; these read AGGILLVIAAAIAMVIANSAM, FGMSVSHWINDGLMAVFFLLI, IFPAIAAVGGMLAPALIYVAF, GWAIPAATDIAFALGIMALLG, VFLLALAIIDDLGVVVIIALF, LSTIALTIGFIMTGVLFMLNA, LILWIAVLKSGVHATLAGVVI, ALHPYVAFAILPVFAFANAGI, GVSLAGLTSMLPLGVALGLFL, IFAVSVLCGIGFTMSIFISSL, and YARLGILMGSTTAALLGYSLL.

Belongs to the NhaA Na(+)/H(+) (TC 2.A.33) antiporter family.

The protein localises to the cell inner membrane. The catalysed reaction is Na(+)(in) + 2 H(+)(out) = Na(+)(out) + 2 H(+)(in). In terms of biological role, na(+)/H(+) antiporter that extrudes sodium in exchange for external protons. The polypeptide is Na(+)/H(+) antiporter NhaA (Vibrio cholerae serotype O1 (strain ATCC 39541 / Classical Ogawa 395 / O395)).